We begin with the raw amino-acid sequence, 216 residues long: Probable GTP-binding protein EngB (216 aa).

In terms of domain architecture, EngB-type G spans 37–214 (QGLEVAFAGR…RAAIIKLVAE (178 aa)). Residues 45–52 (GRSNVGKS), 72–76 (GRTQE), 92–95 (DMPG), 159–162 (TKAD), and 193–195 (TSS) each bind GTP. Positions 52 and 74 each coordinate Mg(2+).

Belongs to the TRAFAC class TrmE-Era-EngA-EngB-Septin-like GTPase superfamily. EngB GTPase family. Mg(2+) serves as cofactor.

Necessary for normal cell division and for the maintenance of normal septation. The chain is Probable GTP-binding protein EngB from Rhodopseudomonas palustris (strain BisA53).